The primary structure comprises 283 residues: Cyclin-C (283 aa).

The Cyclin N-terminal domain occupies 46 to 144 (NVIQALGEHL…ILECEFYLLE (99 aa)). Residues 252–283 (SILSKMPKPKPPPNSDGEQGTNGSQSSGYSQS) are disordered. A compositionally biased stretch (polar residues) spans 267-283 (DGEQGTNGSQSSGYSQS).

It belongs to the cyclin family. Cyclin C subfamily. In terms of assembly, component of the Mediator complex. The cylin/CDK pair formed by ccnc/cdk8 also associates with the large subunit of RNA polymerase II.

Its subcellular location is the nucleus. Functionally, component of the Mediator complex, a coactivator involved in regulated gene transcription of nearly all RNA polymerase II-dependent genes. Mediator functions as a bridge to convey information from gene-specific regulatory proteins to the basal RNA polymerase II transcription machinery. Mediator is recruited to promoters by direct interactions with regulatory proteins and serves as a scaffold for the assembly of a functional preinitiation complex with RNA polymerase II and the general transcription factors. Binds to and activates cyclin-dependent kinase cdk8 that phosphorylates the CTD (C-terminal domain) of the large subunit of RNA polymerase II (RNAp II), which may inhibit the formation of a transcription initiation complex. This Xenopus laevis (African clawed frog) protein is Cyclin-C (ccnc).